We begin with the raw amino-acid sequence, 597 residues long: MEGKKEMGSYKFCLIFTRKFRMTESGPVEDVRDLFEKYTEGDAHMSPEQLQKLMTEEGGEGETSLEEAERIVDEVLRRKHHIAKFTRRNLTLDDFNYYLFSTDLNPPIADQVHQNMDAPLSHYFIFTGHNSYLTGNQLSSNCSELPIADALRRGVRVVELDLWPRGTDDVCVKHGRTLTKEVKLGKCLESIKANAFAISKYPVIITLEDHLTPKLQFKVAKMITQTFGDMLYYHDSQGCQEFPSPEELKEKILISTKPPKEYLEANDTKEKDNGEKGKDSDEDVWGKEPEDLISTQSDLDKVTSSVNDLNQDDEERGSCESDTSCQLQAPEYKRLIAIHAGKPKGGLRMALKVDPNKIRRLSLSEQLLEKAVASYGADVIRFTQKNFLRIYPKGTRFNSSNYKPQIGWMSGAQMIAFNMQGYGRALWLMEGMFRANGGCGYVKKPDFLMDASPNGQDFYPKDNSSPKKTLKVKVCMGDGWLLDFKKTHFDSYSPPDFFVRVGIAGAPVDEVMEKTKIEYDTWTPIWNKEFTFPLAVPELALLRVEVHEHDVNEKDDFGGQTCLPVSEIRQGIRAVPLFNRKGVKYSSTRLLMRFEFV.

The 35-residue stretch at Gly26–Glu60 folds into the EF-hand domain. The PI-PLC X-box domain maps to Gln114–Lys257. Residues His129 and His174 contribute to the active site. The segment covering Pro259–Glu290 has biased composition (basic and acidic residues). Residues Pro259 to Ser324 form a disordered region. The segment covering Ile293–Leu309 has biased composition (polar residues). The 117-residue stretch at Lys333–Met449 folds into the PI-PLC Y-box domain. A C2 domain is found at Met449 to Asn579.

The cofactor is Ca(2+). Low expression in leaves, roots, flowers and siliques. Expressed in pollen and in cells of the stigma surface.

It localises to the cytoplasm. The protein resides in the cytosol. It is found in the cell membrane. The enzyme catalyses a 1,2-diacyl-sn-glycero-3-phospho-(1D-myo-inositol-4,5-bisphosphate) + H2O = 1D-myo-inositol 1,4,5-trisphosphate + a 1,2-diacyl-sn-glycerol + H(+). Its function is as follows. The production of the second messenger molecules diacylglycerol (DAG) and inositol 1,4,5-trisphosphate (IP3) is mediated by activated phosphatidylinositol-specific phospholipase C enzymes. The sequence is that of Phosphoinositide phospholipase C 4 (PLC4) from Arabidopsis thaliana (Mouse-ear cress).